Consider the following 594-residue polypeptide: Potassium-transporting ATPase potassium-binding subunit (594 aa).

10 helical membrane-spanning segments follow: residues 3 to 23 (ADFLGLLLLYLAILLCAAPLL), 67 to 87 (AVAMLVFNVLGVLAVYALQRL), 136 to 156 (ALTVQNFVSAATGIAVLIALV), 179 to 199 (LYVLLPLSFILALALVSQGVV), 287 to 307 (LEMLAILLIPAALCWTFGEMV), 314 to 334 (VAILAAMTVLFAGFAASAAYF), 415 to 435 (GLYGMLAFAILAVFIAGLMIG), 453 to 473 (VALVILATPALVLAGTAVAVL), 519 to 539 (VLLGLAMWFGRYTIIVAILAL), and 562 to 582 (LFVALLVGAVLLVGALTYVPA).

It belongs to the KdpA family. In terms of assembly, the system is composed of three essential subunits: KdpA, KdpB and KdpC.

The protein localises to the cell inner membrane. Its function is as follows. Part of the high-affinity ATP-driven potassium transport (or Kdp) system, which catalyzes the hydrolysis of ATP coupled with the electrogenic transport of potassium into the cytoplasm. This subunit binds the periplasmic potassium ions and delivers the ions to the membrane domain of KdpB through an intramembrane tunnel. The sequence is that of Potassium-transporting ATPase potassium-binding subunit from Bordetella pertussis (strain Tohama I / ATCC BAA-589 / NCTC 13251).